A 392-amino-acid polypeptide reads, in one-letter code: GTPase Obg (392 aa).

Residues 1-159 form the Obg domain; it reads MKFVDEATIL…RDLQLELMLL (159 aa). The disordered stretch occupies residues 127–148; the sequence is NSRFKSSVNRSPRQKTMGTPGD. Positions 129-143 are enriched in polar residues; sequence RFKSSVNRSPRQKTM. Positions 160–333 constitute an OBG-type G domain; sequence ADVGMLGMPN…LCWDVMAFII (174 aa). GTP contacts are provided by residues 166-173, 191-195, 213-216, 283-286, and 314-316; these read GMPNAGKS, FTTLV, DIPG, NKID, and SAA. Mg(2+) contacts are provided by Ser-173 and Thr-193. The span at 363–386 shows a compositional bias: acidic residues; that stretch reads EQEVEVEDDEEWDEDWDEDDEEGV. Residues 363–392 form a disordered region; that stretch reads EQEVEVEDDEEWDEDWDEDDEEGVEFIYKR.

Belongs to the TRAFAC class OBG-HflX-like GTPase superfamily. OBG GTPase family. In terms of assembly, monomer. It depends on Mg(2+) as a cofactor.

It is found in the cytoplasm. In terms of biological role, an essential GTPase which binds GTP, GDP and possibly (p)ppGpp with moderate affinity, with high nucleotide exchange rates and a fairly low GTP hydrolysis rate. Plays a role in control of the cell cycle, stress response, ribosome biogenesis and in those bacteria that undergo differentiation, in morphogenesis control. The chain is GTPase Obg from Enterobacter sp. (strain 638).